Here is a 307-residue protein sequence, read N- to C-terminus: Ubiquitin recognition factor in ER-associated degradation protein 1 (307 aa).

Residue Met-1 is modified to N-acetylmethionine. Residues Ser-129, Ser-231, Ser-245, Ser-247, and Ser-299 each carry the phosphoserine modification. Disordered stretches follow at residues 230-255 and 282-307; these read GSGNRLDGKKKGVEPSPSPIKPGDIK and EEDEAGGRFVAFSGEGQSLRKKGRKP.

It belongs to the UFD1 family. In terms of assembly, interacts with USP13. Heterodimer with NPLOC4, this heterodimer binds VCP and inhibits Golgi membrane fusion. Interacts with ZFAND2B; probably through VCP.

The protein localises to the nucleus. Its subcellular location is the cytoplasm. It is found in the cytosol. Its pathway is protein degradation; proteasomal ubiquitin-dependent pathway. Functionally, essential component of the ubiquitin-dependent proteolytic pathway which degrades ubiquitin fusion proteins. The ternary complex containing UFD1, VCP and NPLOC4 binds ubiquitinated proteins and is necessary for the export of misfolded proteins from the ER to the cytoplasm, where they are degraded by the proteasome. The NPLOC4-UFD1-VCP complex regulates spindle disassembly at the end of mitosis and is necessary for the formation of a closed nuclear envelope. It may be involved in the development of some ectoderm-derived structures. Acts as a negative regulator of type I interferon production via the complex formed with VCP and NPLOC4, which binds to RIGI and recruits RNF125 to promote ubiquitination and degradation of RIGI. This chain is Ubiquitin recognition factor in ER-associated degradation protein 1, found in Rattus norvegicus (Rat).